A 348-amino-acid chain; its full sequence is Protein RecA (348 aa).

65–72 lines the ATP pocket; the sequence is GPESSGKT. The interval 326–348 is disordered; it reads QMGSESLSSSSDDDDIKEESGEE. Residues 336-348 show a composition bias toward acidic residues; that stretch reads SDDDDIKEESGEE.

This sequence belongs to the RecA family.

Its subcellular location is the cytoplasm. In terms of biological role, can catalyze the hydrolysis of ATP in the presence of single-stranded DNA, the ATP-dependent uptake of single-stranded DNA by duplex DNA, and the ATP-dependent hybridization of homologous single-stranded DNAs. It interacts with LexA causing its activation and leading to its autocatalytic cleavage. In Campylobacter hominis (strain ATCC BAA-381 / DSM 21671 / CCUG 45161 / LMG 19568 / NCTC 13146 / CH001A), this protein is Protein RecA.